Reading from the N-terminus, the 445-residue chain is MSRLLACLKQLQARSLIHNTTLLQPSCNVNSVYLGADPTAASLHVGNLVALMPLVHFFLNGFPVFTVIGDATAQLGDPSGRSTSRKQMAETTRTANSNSIHNQLKDLSSSILSYAQDCNYPFSQMPSSSQWSIVRNSSWYENLKLLKFLSSVGPHVRVSQMLARDSVTTRLQSPSGLSFAELTYQLLQAYDYSYLYENHSVNLQIGGSDQWGNITAGTDLVRRTHPNANVYALTTPLLTSSSGQKLGKSAGNAIWLDPKLTDSYSLYQYFISAPDDLACKCLDMLTLLPLEQLEQIKAEHEKDPSQRIVHKYLASNVVRMVHGKKALELAQIQTKLLHGAHQAPFGFYSEAPQQGDSFPSLPEIRALFKDCKFYRTIDSSIKDQPFSRLLRTLQIYTSRKEATEHILSGAVSLGHKPILDSNYKFPDNSLFVLRAGKRTFVLDSL.

Y33 contacts L-tyrosine. ATP is bound at residue D37. Residues 38-47 carry the 'HIGH' region motif; that stretch reads PTAASLHVGN. Residues D77, Y184, Q188, D191, and Q210 each coordinate L-tyrosine. The short motif at 245 to 249 is the 'KMSKS' region element; it reads KLGKS. ATP is bound at residue K248. Positions 384-445 constitute an S4 RNA-binding domain; that stretch reads QPFSRLLRTL…GKRTFVLDSL (62 aa).

The protein belongs to the class-I aminoacyl-tRNA synthetase family. As to quaternary structure, homodimer.

Its subcellular location is the mitochondrion matrix. It catalyses the reaction tRNA(Tyr) + L-tyrosine + ATP = L-tyrosyl-tRNA(Tyr) + AMP + diphosphate + H(+). Its function is as follows. Catalyzes the attachment of tyrosine to tRNA(Tyr) in a two-step reaction: tyrosine is first activated by ATP to form Tyr-AMP and then transferred to the acceptor end of tRNA(Tyr). This is Tyrosine--tRNA ligase, mitochondrial from Schizosaccharomyces pombe (strain 972 / ATCC 24843) (Fission yeast).